The sequence spans 374 residues: Organelle RRM domain-containing protein 1, chloroplastic (374 aa).

The transit peptide at 1–54 directs the protein to the chloroplast; the sequence is MEALIASTSFFVPISNSSSSHIINNRFFPSFYSPNLNFGTFRKTSLSSSHLVFS. Basic and acidic residues predominate over residues 258 to 271; it reads KDYEGDSTQDSRDQ. Positions 258–279 are disordered; sequence KDYEGDSTQDSRDQDDSESPPV. The RRM domain maps to 282 to 360; sequence KKLFITGLSF…WMIVVDVAKT (79 aa).

In terms of assembly, interacts with PCMP-H51/CRR28 and PCMP-H12/OTP82. Interacts with MORF8/RIP1, MORF2/RIP2 and VAR3/OZ1.

The protein resides in the plastid. It localises to the chloroplast. Its function is as follows. Involved in C-to-U editing of chloroplastic RNA. Functions as major chloroplastic editing factor. Controls 62 percent of the chloroplastic editing sites. Binds RNA close to ORRM1-dependent editing sites in vitro. Binds the editing recognition trans-factors PCMP-H51/CRR28 and PCMP-H12/OTP82. The chain is Organelle RRM domain-containing protein 1, chloroplastic from Arabidopsis thaliana (Mouse-ear cress).